The sequence spans 252 residues: Ribonuclease HII (252 aa).

The region spanning 68–252 (EYVAGLDEVG…FGPVRDRLRS (185 aa)) is the RNase H type-2 domain. The a divalent metal cation site is built by Asp-74, Glu-75, and Asp-165.

Belongs to the RNase HII family. Mn(2+) serves as cofactor. Requires Mg(2+) as cofactor.

It is found in the cytoplasm. The enzyme catalyses Endonucleolytic cleavage to 5'-phosphomonoester.. Functionally, endonuclease that specifically degrades the RNA of RNA-DNA hybrids. The polypeptide is Ribonuclease HII (Lacticaseibacillus paracasei (strain ATCC 334 / BCRC 17002 / CCUG 31169 / CIP 107868 / KCTC 3260 / NRRL B-441) (Lactobacillus paracasei)).